A 209-amino-acid polypeptide reads, in one-letter code: Ribonuclease HII (209 aa).

Residues 20–209 (DSEIGIDEVG…KSFLNKLNLI (190 aa)) enclose the RNase H type-2 domain. Aspartate 26, glutamate 27, and aspartate 122 together coordinate a divalent metal cation.

This sequence belongs to the RNase HII family. Requires Mn(2+) as cofactor. Mg(2+) serves as cofactor.

The protein localises to the cytoplasm. The catalysed reaction is Endonucleolytic cleavage to 5'-phosphomonoester.. In terms of biological role, endonuclease that specifically degrades the RNA of RNA-DNA hybrids. This Prochlorococcus marinus subsp. pastoris (strain CCMP1986 / NIES-2087 / MED4) protein is Ribonuclease HII.